Here is a 610-residue protein sequence, read N- to C-terminus: UvrABC system protein C (610 aa).

Residues 13 to 91 (HLPGVYRMYD…IKENQPKYNV (79 aa)) form the GIY-YIG domain. The 36-residue stretch at 201-236 (GQVVEHLVQKMENAAQELDFEAAARFRDQIQSVRAV) folds into the UVR domain.

Belongs to the UvrC family. As to quaternary structure, interacts with UvrB in an incision complex.

The protein resides in the cytoplasm. In terms of biological role, the UvrABC repair system catalyzes the recognition and processing of DNA lesions. UvrC both incises the 5' and 3' sides of the lesion. The N-terminal half is responsible for the 3' incision and the C-terminal half is responsible for the 5' incision. In Actinobacillus pleuropneumoniae serotype 7 (strain AP76), this protein is UvrABC system protein C.